Consider the following 729-residue polypeptide: Sodium-dependent neutral amino acid transporter B(0)AT2 (729 aa).

The Cytoplasmic segment spans residues 1 to 69; sequence MPKNSKVVKR…ARPAWNSKLQ (69 aa). Residues serine 25 and serine 55 each carry the phosphoserine modification. A run of 3 helical transmembrane segments spans residues 70–90, 98–117, and 142–162; these read YILA…FPYL, AYLL…LFFL, and GIGF…NVII. The Extracellular segment spans residues 163–225; the sequence is GWSLFYFSQS…TSISESGGLN (63 aa). Residues asparagine 187 and asparagine 213 are each glycosylated (N-linked (GlcNAc...) asparagine). 4 consecutive transmembrane segments (helical) span residues 226 to 244, 253 to 270, 306 to 323, and 335 to 356; these read WKMT…LAMI, IMYF…CFLI, VFFA…FSSY, and VLVS…FAVL. The Extracellular segment spans residues 357–452; the sequence is GFKANVINEK…FIAFTEAMTH (96 aa). Residues asparagine 383 and asparagine 394 are each glycosylated (N-linked (GlcNAc...) asparagine). The next 5 membrane-spanning stretches (helical) occupy residues 453-472, 496-514, 530-550, 571-592, and 620-642; these read FPAS…NLGL, ILTV…IFVQ, TLPL…VYGI, YMWK…IVNM, and VICI…IRRC. At 643–729 the chain is on the cytoplasmic side; it reads NLIDDSSGNL…DMPDMPESDL (87 aa). A phosphoserine mark is found at serine 687, serine 699, and serine 701.

This sequence belongs to the sodium:neurotransmitter symporter (SNF) (TC 2.A.22) family. SLC6A15 subfamily.

It localises to the membrane. The catalysed reaction is L-leucine(in) + Na(+)(in) = L-leucine(out) + Na(+)(out). The enzyme catalyses L-isoleucine(in) + Na(+)(in) = L-isoleucine(out) + Na(+)(out). It catalyses the reaction L-methionine(in) + Na(+)(in) = L-methionine(out) + Na(+)(out). It carries out the reaction L-proline(in) + Na(+)(in) = L-proline(out) + Na(+)(out). The catalysed reaction is L-alanine(in) + Na(+)(in) = L-alanine(out) + Na(+)(out). The enzyme catalyses L-asparagine(in) + Na(+)(in) = L-asparagine(out) + Na(+)(out). It catalyses the reaction L-valine(in) + Na(+)(in) = L-valine(out) + Na(+)(out). It carries out the reaction L-cysteine(in) + Na(+)(in) = L-cysteine(out) + Na(+)(out). The catalysed reaction is L-glutamine(in) + Na(+)(in) = L-glutamine(out) + Na(+)(out). The enzyme catalyses L-serine(in) + Na(+)(in) = L-serine(out) + Na(+)(out). It catalyses the reaction L-threonine(in) + Na(+)(in) = L-threonine(out) + Na(+)(out). It carries out the reaction L-pipecolate(in) + Na(+)(in) = L-pipecolate(out) + Na(+)(out). The catalysed reaction is L-phenylalanine(in) + Na(+)(in) = L-phenylalanine(out) + Na(+)(out). Its function is as follows. Functions as a sodium-dependent neutral amino acid transporter. Exhibits preference for the branched-chain amino acids, particularly leucine, valine and isoleucine and methionine. Can also transport low-affinity substrates such as alanine, phenylalanine, glutamine and pipecolic acid. Mediates the saturable, pH-sensitive and electrogenic cotransport of proline and sodium ions with a stoichiometry of 1:1. May have a role as transporter for neurotransmitter precursors into neurons. In contrast to other members of the neurotransmitter transporter family, does not appear to be chloride-dependent. The sequence is that of Sodium-dependent neutral amino acid transporter B(0)AT2 (SLC6A15) from Bos taurus (Bovine).